A 644-amino-acid chain; its full sequence is Exoribonuclease 2 (644 aa).

The 328-residue stretch at arginine 189–alanine 516 folds into the RNB domain. The 83-residue stretch at aspartate 561 to alanine 643 folds into the S1 motif domain.

This sequence belongs to the RNR ribonuclease family. RNase II subfamily.

The protein localises to the cytoplasm. It catalyses the reaction Exonucleolytic cleavage in the 3'- to 5'-direction to yield nucleoside 5'-phosphates.. Involved in mRNA degradation. Hydrolyzes single-stranded polyribonucleotides processively in the 3' to 5' direction. The polypeptide is Exoribonuclease 2 (Serratia proteamaculans (strain 568)).